Consider the following 118-residue polypeptide: Large ribosomal subunit protein bL19 (118 aa).

The protein belongs to the bacterial ribosomal protein bL19 family.

Functionally, this protein is located at the 30S-50S ribosomal subunit interface and may play a role in the structure and function of the aminoacyl-tRNA binding site. The polypeptide is Large ribosomal subunit protein bL19 (Helicobacter pylori (strain HPAG1)).